Here is a 409-residue protein sequence, read N- to C-terminus: uncharacterized protein (409 aa).

10 consecutive transmembrane segments (helical) span residues 62–82 (FSLGIAAEAVLFIFALWWVWI), 100–120 (LLLFTLMFFGIVMAIALPEAF), 123–143 (MGLLFAVAYSAMQVSRSLFAL), 152–172 (ASFMTFFRITAWLTISSTFWI), 183–203 (VVLWIVALVVEYTGPTVRYWV), 252–272 (GTPWVLCFSFLTTVLMWWIYF), 293–313 (AQYLFTYGHLPIVGGIIFTAV), 328–348 (YNFALAQLGGPILFLAGTMWM), 355–375 (VLPYSHVFGISLLTASFTLVP), and 376–396 (FVANFAIQALTGVILLVVAVW).

Its subcellular location is the cell membrane. This is an uncharacterized protein from Rhizobium meliloti (strain 1021) (Ensifer meliloti).